We begin with the raw amino-acid sequence, 176 residues long: MTTIVSVRRNGQVVVGGDGQVSLGNTVMKGNARKVRRLYNGKVLAGFAGGTADAFTLFELFERKLEMHQGHLLKSAVELAKDWRTDRALRKLEAMLIVADEKESLIITGIGDVVQPEADQILAIGSGGNFALSAARALVENTELSAREIVEKSLKIAGDICVYTNTHFTIEELPNS.

Residue threonine 2 is part of the active site. 3 residues coordinate Na(+): glycine 158, cysteine 161, and threonine 164.

This sequence belongs to the peptidase T1B family. HslV subfamily. In terms of assembly, a double ring-shaped homohexamer of HslV is capped on each side by a ring-shaped HslU homohexamer. The assembly of the HslU/HslV complex is dependent on binding of ATP.

It is found in the cytoplasm. The catalysed reaction is ATP-dependent cleavage of peptide bonds with broad specificity.. Allosterically activated by HslU binding. Functionally, protease subunit of a proteasome-like degradation complex believed to be a general protein degrading machinery. The protein is ATP-dependent protease subunit HslV of Pasteurella multocida (strain Pm70).